Reading from the N-terminus, the 179-residue chain is dCTP deaminase (179 aa).

DCTP contacts are provided by residues arginine 101–arginine 106 and aspartate 117. The active-site Proton donor/acceptor is glutamate 127. Glutamine 165 is a binding site for dCTP.

Belongs to the dCTP deaminase family. As to quaternary structure, homotrimer.

It catalyses the reaction dCTP + H2O + H(+) = dUTP + NH4(+). Its pathway is pyrimidine metabolism; dUMP biosynthesis; dUMP from dCTP (dUTP route): step 1/2. Catalyzes the deamination of dCTP to dUTP. This Caldivirga maquilingensis (strain ATCC 700844 / DSM 13496 / JCM 10307 / IC-167) protein is dCTP deaminase.